We begin with the raw amino-acid sequence, 181 residues long: CDP-archaeol synthase (181 aa).

The next 5 helical transmembrane spans lie at 7-27, 55-75, 80-100, 128-148, and 150-170; these read VVVA…AVLA, AVGT…RPAA, GVVL…GAMV, FVVV…GDTF, and LPVL…TNGI.

It belongs to the CDP-archaeol synthase family. Requires Mg(2+) as cofactor.

Its subcellular location is the cell membrane. The catalysed reaction is 2,3-bis-O-(geranylgeranyl)-sn-glycerol 1-phosphate + CTP + H(+) = CDP-2,3-bis-O-(geranylgeranyl)-sn-glycerol + diphosphate. It participates in membrane lipid metabolism; glycerophospholipid metabolism. In terms of biological role, catalyzes the formation of CDP-2,3-bis-(O-geranylgeranyl)-sn-glycerol (CDP-archaeol) from 2,3-bis-(O-geranylgeranyl)-sn-glycerol 1-phosphate (DGGGP) and CTP. This reaction is the third ether-bond-formation step in the biosynthesis of archaeal membrane lipids. This Halobacterium salinarum (strain ATCC 29341 / DSM 671 / R1) protein is CDP-archaeol synthase.